The chain runs to 29 residues: Glucagon (29 aa).

This sequence belongs to the glucagon family.

The protein resides in the secreted. In terms of biological role, glucagon plays a key role in glucose metabolism and homeostasis. Regulates blood glucose by increasing gluconeogenesis and decreasing glycolysis. This Callorhinchus milii (Ghost shark) protein is Glucagon (gcg).